The primary structure comprises 640 residues: Spindle assembly abnormal protein 6 homolog (640 aa).

One can recognise a PISA domain in the interval 40–92; it reads VHKKDLAVRLTDDADPFFLYNLVISEEDFQSLKSQQGLLVDFSAFPQKFIDLL. Residues 154–475 are a coiled coil; it reads LARCLKCLKE…KQLLKTNENV (322 aa).

Nine homodimers form a cartwheel structure with an internal diameter of 23 nM and radial spokes connecting to the microtubule triplets.

Its subcellular location is the cytoplasm. The protein resides in the cytoskeleton. It is found in the microtubule organizing center. It localises to the centrosome. Central scaffolding component of the centrioles ensuring their 9-fold symmetry. Required for centrosome biogenesis and duplication: required both for mother-centriole-dependent centriole duplication and deuterosome-dependent centriole amplification in multiciliated cells. The sequence is that of Spindle assembly abnormal protein 6 homolog (SASS6) from Gallus gallus (Chicken).